The sequence spans 182 residues: Oligoribonuclease (182 aa).

In terms of domain architecture, Exonuclease spans 8–171 (LIWIDLEMTG…DDIRESIKEL (164 aa)). The active site involves tyrosine 129.

Belongs to the oligoribonuclease family.

It localises to the cytoplasm. Its function is as follows. 3'-to-5' exoribonuclease specific for small oligoribonucleotides. This Haemophilus influenzae (strain 86-028NP) protein is Oligoribonuclease.